The following is a 341-amino-acid chain: Ketol-acid reductoisomerase (NADP(+)) (341 aa).

Residues 1 to 182 enclose the KARI N-terminal Rossmann domain; sequence MTELFYDDDA…GGTRAGVIKT (182 aa). Residues 25 to 28, serine 51, serine 53, and 83 to 86 contribute to the NADP(+) site; these read YGSQ and DQVQ. Histidine 108 is an active-site residue. Glycine 134 contributes to the NADP(+) binding site. Positions 183–328 constitute a KARI C-terminal knotted domain; it reads TFTEETETDL…RELRKLFSWI (146 aa). Mg(2+)-binding residues include aspartate 191, glutamate 195, glutamate 227, and glutamate 231. Serine 252 lines the substrate pocket.

The protein belongs to the ketol-acid reductoisomerase family. It depends on Mg(2+) as a cofactor.

The enzyme catalyses (2R)-2,3-dihydroxy-3-methylbutanoate + NADP(+) = (2S)-2-acetolactate + NADPH + H(+). It carries out the reaction (2R,3R)-2,3-dihydroxy-3-methylpentanoate + NADP(+) = (S)-2-ethyl-2-hydroxy-3-oxobutanoate + NADPH + H(+). Its pathway is amino-acid biosynthesis; L-isoleucine biosynthesis; L-isoleucine from 2-oxobutanoate: step 2/4. The protein operates within amino-acid biosynthesis; L-valine biosynthesis; L-valine from pyruvate: step 2/4. Functionally, involved in the biosynthesis of branched-chain amino acids (BCAA). Catalyzes an alkyl-migration followed by a ketol-acid reduction of (S)-2-acetolactate (S2AL) to yield (R)-2,3-dihydroxy-isovalerate. In the isomerase reaction, S2AL is rearranged via a Mg-dependent methyl migration to produce 3-hydroxy-3-methyl-2-ketobutyrate (HMKB). In the reductase reaction, this 2-ketoacid undergoes a metal-dependent reduction by NADPH to yield (R)-2,3-dihydroxy-isovalerate. The polypeptide is Ketol-acid reductoisomerase (NADP(+)) (Renibacterium salmoninarum (strain ATCC 33209 / DSM 20767 / JCM 11484 / NBRC 15589 / NCIMB 2235)).